The chain runs to 997 residues: Protein HIR2 (997 aa).

WD repeat units follow at residues 10 to 48 (GISG…DTAF), 117 to 152 (VSQS…TRSA), 153 to 194 (NKKE…VVYH), 274 to 319 (VHSP…PLFA), and 323 to 362 (ISDS…LGKT). The disordered stretch occupies residues 408–584 (ADNSSNILST…RKPKEDALGN (177 aa)). Residues 409–446 (DNSSNILSTDTNTNEKNLSTVNTTEPQTNSQSSSYNNK) are compositionally biased toward polar residues. Residues 464 to 480 (SDEKAKNLEARPIEAKS) show a composition bias toward basic and acidic residues. A compositionally biased stretch (polar residues) spans 491–501 (SKSSSVTTSDN). Positions 518–538 (TEKKTKPDKKSIKSENGESKV) are enriched in basic and acidic residues. Residues 539–567 (NKAQNTISPKESNTTDNKSTTPDFKNPSY) are compositionally biased toward polar residues. WD repeat units follow at residues 665 to 706 (LFQD…IIPP) and 708 to 745 (TIGV…LEFP).

The protein belongs to the WD repeat HIR1 family.

The protein localises to the nucleus. Its function is as follows. Required for replication-independent chromatin assembly and for the periodic repression of histone gene transcription during the cell cycle. This chain is Protein HIR2 (HIR2), found in Candida glabrata (strain ATCC 2001 / BCRC 20586 / JCM 3761 / NBRC 0622 / NRRL Y-65 / CBS 138) (Yeast).